A 263-amino-acid polypeptide reads, in one-letter code: MALKHYKNSDSTVFNDAKALFDLNKNILLKGPTGSGKTKLAETLSEVVDTPMHQVNCSVDLDTESLLGFKTIKTNAEGQQEIVFVDGPVIKAMKEGHILYIDEINMAKPETLPVLNGVLDYRRQITNPYTGEVIKAVPGFNVIAAINEGYVGTLPMNEALKNRFVVIHVDYIDGDILKNVIKEQSLLQGDKQIEQIIKFNEDLRTMSKQGQISEEAASIRALLDLCDLITVMPVERAIKRTIIDKLEDEREQQAIYNAVELNF.

Glycine 31 to threonine 38 is a binding site for ATP.

Belongs to the CbbQ/NirQ/NorQ/GpvN family.

This is an uncharacterized protein from Staphylococcus aureus (strain USA300).